The sequence spans 222 residues: Peptide methionine sulfoxide reductase MsrA (222 aa).

Cys60 is an active-site residue.

It belongs to the MsrA Met sulfoxide reductase family.

The catalysed reaction is L-methionyl-[protein] + [thioredoxin]-disulfide + H2O = L-methionyl-(S)-S-oxide-[protein] + [thioredoxin]-dithiol. It catalyses the reaction [thioredoxin]-disulfide + L-methionine + H2O = L-methionine (S)-S-oxide + [thioredoxin]-dithiol. Its function is as follows. Has an important function as a repair enzyme for proteins that have been inactivated by oxidation. Catalyzes the reversible oxidation-reduction of methionine sulfoxide in proteins to methionine. This Pseudomonas putida (strain W619) protein is Peptide methionine sulfoxide reductase MsrA.